Consider the following 196-residue polypeptide: Small ribosomal subunit protein uS4c (196 aa).

The disordered stretch occupies residues 17–36; the sequence is ALPGLTRKTPKSGSNLKKKF. The 62-residue stretch at 89–150 folds into the S4 RNA-binding domain; it reads MRLDNILFRL…NQRSKRLIQN (62 aa).

It belongs to the universal ribosomal protein uS4 family. As to quaternary structure, part of the 30S ribosomal subunit. Contacts protein S5. The interaction surface between S4 and S5 is involved in control of translational fidelity.

The protein localises to the plastid. It is found in the chloroplast. Its function is as follows. One of the primary rRNA binding proteins, it binds directly to 16S rRNA where it nucleates assembly of the body of the 30S subunit. In terms of biological role, with S5 and S12 plays an important role in translational accuracy. In Phyllostachys flexuosa (Drooping timber bamboo), this protein is Small ribosomal subunit protein uS4c (rps4).